We begin with the raw amino-acid sequence, 464 residues long: Glycine receptor subunit alpha-3 (464 aa).

The N-terminal stretch at 1-33 (MAHVRHFRTLLSGFYFWEAALLLSLVATKETNS) is a signal peptide. Residues 34-255 (ARSRSAPMSP…RFHLERQMGY (222 aa)) are Extracellular-facing. N-linked (GlcNAc...) asparagine glycosylation occurs at N71. Cysteines 171 and 185 form a disulfide. Zn(2+) contacts are provided by E225 and D227. The cysteines at positions 231 and 242 are disulfide-linked. Strychnine is bound at residue 235 to 240 (YNTGKF). H248 is a Zn(2+) binding site. A helical transmembrane segment spans residues 256–277 (YLIQMYIPSLLIVILSWVSFWI). The Cytoplasmic portion of the chain corresponds to 278 to 282 (NMDAA). Residues 283–303 (PARVALGITTVLTMTTQSSGS) traverse the membrane as a helical segment. Residues 304–314 (RASLPKVSYVK) lie on the Extracellular side of the membrane. Residues 315-335 (AIDIWMAVCLLFVFSALLEYA) form a helical membrane-spanning segment. Residues 336 to 430 (AVNFVSRQHK…FIDRAKKIDT (95 aa)) are Cytoplasmic-facing. S370 bears the Phosphoserine mark. At S379 the chain carries Phosphoserine; by PKA. The chain crosses the membrane as a helical span at residues 431–451 (ISRACFPLAFLIFNIFYWVIY). Topologically, residues 452–464 (KILRHEDIHHQQD) are extracellular.

The protein belongs to the ligand-gated ion channel (TC 1.A.9) family. Glycine receptor (TC 1.A.9.3) subfamily. GLRA3 sub-subfamily. As to quaternary structure, homopentamer (in vitro). Heteropentamer composed of GLRA3 and GLRB. Both homopentamers and heteropentamers form functional ion channels, but their characteristics are subtly different. Phosphorylated by PKA; this causes down-regulation of channel activity.

It localises to the postsynaptic cell membrane. Its subcellular location is the perikaryon. It is found in the cell projection. The protein localises to the dendrite. The protein resides in the synapse. It localises to the cell membrane. It carries out the reaction chloride(in) = chloride(out). Low levels of Zn(2+) ions (1 uM) increase glycine sensitivity and decrease the glycine concentration required for half-maximal channel activity. Channel activity is strongly enhanced by ethanol. Inhibited by picrotoxin. Inhibited by prostaglandin E2, probably via PKA-mediated phosphorylation at Ser-379. In terms of biological role, glycine receptors are ligand-gated chloride channels. Channel opening is triggered by extracellular glycine. Channel characteristics depend on the subunit composition; heteropentameric channels display faster channel closure. Plays an important role in the down-regulation of neuronal excitability. Contributes to the generation of inhibitory postsynaptic currents. Contributes to increased pain perception in response to increased prostaglandin E2 levels. Plays a role in cellular responses to ethanol. The sequence is that of Glycine receptor subunit alpha-3 (Glra3) from Rattus norvegicus (Rat).